A 394-amino-acid chain; its full sequence is Succinate--CoA ligase [ADP-forming] subunit beta (394 aa).

Residues K46, 53–55, E99, C102, and E107 contribute to the ATP site; that span reads GRG. N199 and D213 together coordinate Mg(2+). Substrate-binding positions include N264 and 321 to 323; that span reads GIV.

This sequence belongs to the succinate/malate CoA ligase beta subunit family. Heterotetramer of two alpha and two beta subunits. Mg(2+) serves as cofactor.

The catalysed reaction is succinate + ATP + CoA = succinyl-CoA + ADP + phosphate. The enzyme catalyses GTP + succinate + CoA = succinyl-CoA + GDP + phosphate. It participates in carbohydrate metabolism; tricarboxylic acid cycle; succinate from succinyl-CoA (ligase route): step 1/1. Succinyl-CoA synthetase functions in the citric acid cycle (TCA), coupling the hydrolysis of succinyl-CoA to the synthesis of either ATP or GTP and thus represents the only step of substrate-level phosphorylation in the TCA. The beta subunit provides nucleotide specificity of the enzyme and binds the substrate succinate, while the binding sites for coenzyme A and phosphate are found in the alpha subunit. This chain is Succinate--CoA ligase [ADP-forming] subunit beta, found in Haemophilus influenzae (strain PittGG).